The following is a 97-amino-acid chain: Co-chaperonin GroES (97 aa).

This sequence belongs to the GroES chaperonin family. Heptamer of 7 subunits arranged in a ring. Interacts with the chaperonin GroEL.

It localises to the cytoplasm. Functionally, together with the chaperonin GroEL, plays an essential role in assisting protein folding. The GroEL-GroES system forms a nano-cage that allows encapsulation of the non-native substrate proteins and provides a physical environment optimized to promote and accelerate protein folding. GroES binds to the apical surface of the GroEL ring, thereby capping the opening of the GroEL channel. The sequence is that of Co-chaperonin GroES from Aeromonas hydrophila subsp. hydrophila (strain ATCC 7966 / DSM 30187 / BCRC 13018 / CCUG 14551 / JCM 1027 / KCTC 2358 / NCIMB 9240 / NCTC 8049).